The sequence spans 148 residues: Probable DNA-directed RNA polymerases I, II, and III subunit RPABC3 (148 aa).

The non-specific ssDNA binding stretch occupies residues 16 to 40 (DPDGKKFDRVSRYFCDAESFKMELI).

The protein belongs to the eukaryotic RPB8 RNA polymerase subunit family. As to quaternary structure, component of the RNA polymerase I (Pol I), RNA polymerase II (Pol II) and RNA polymerase III (Pol III) complexes consisting of at least 13, 12 and 17 subunits, respectively. Directly interacts with POLR2A.

It localises to the nucleus. In terms of biological role, DNA-dependent RNA polymerase catalyzes the transcription of DNA into RNA using the four ribonucleoside triphosphates as substrates. Common component of RNA polymerases I, II and III which synthesize ribosomal RNA precursors, mRNA precursors and many functional non-coding RNAs, and small RNAs, such as 5S rRNA and tRNAs, respectively. This Caenorhabditis briggsae protein is Probable DNA-directed RNA polymerases I, II, and III subunit RPABC3.